Here is a 412-residue protein sequence, read N- to C-terminus: Putative competence-damage inducible protein (412 aa).

It belongs to the CinA family.

The chain is Putative competence-damage inducible protein from Bacillus cereus (strain Q1).